A 553-amino-acid chain; its full sequence is Putative transport protein YidE (553 aa).

5 consecutive transmembrane segments (helical) span residues 4 to 24 (IALT…IGNV), 28 to 48 (GVGL…HFVS), 65 to 85 (FGLI…FFAS), 95 to 115 (LFAV…HKLF), and 158 to 178 (MSYA…MWML). RCK C-terminal domains lie at 191–276 (QQHE…VIGQ) and 279–361 (DTSL…VLGN). Transmembrane regions (helical) follow at residues 371–391 (MLPV…PVFV), 393–413 (GFPA…ALIL), 439–459 (IVLF…HTLV), 464–484 (LSWI…VGIL), 493–513 (YLTM…LAFA), and 533–553 (LVMF…WSIG).

It belongs to the AAE transporter (TC 2.A.81) family. YidE subfamily.

It localises to the cell membrane. This is Putative transport protein YidE from Escherichia coli O6:K15:H31 (strain 536 / UPEC).